A 359-amino-acid polypeptide reads, in one-letter code: Mannonate dehydratase (359 aa).

This sequence belongs to the mannonate dehydratase family. Requires Fe(2+) as cofactor. The cofactor is Mn(2+).

It carries out the reaction D-mannonate = 2-dehydro-3-deoxy-D-gluconate + H2O. The protein operates within carbohydrate metabolism; pentose and glucuronate interconversion. In terms of biological role, catalyzes the dehydration of D-mannonate. This Moorella thermoacetica (strain ATCC 39073 / JCM 9320) protein is Mannonate dehydratase.